The following is a 397-amino-acid chain: Na(+)/H(+) antiporter NhaA 1 (397 aa).

12 consecutive transmembrane segments (helical) span residues 15 to 35, 42 to 62, 65 to 85, 101 to 121, 129 to 149, 160 to 180, 183 to 203, 219 to 241, 265 to 285, 299 to 319, 335 to 355, and 370 to 390; these read FQLE…ALII, YLYG…LNIA, LLLW…GLEV, ILPA…YWFI, VAGW…VLAL, LFLM…IALF, GTLS…LVAM, LILW…ALAF, WVAY…SLAG, ITIG…WVAV, ILGV…VGSL, and MGIL…TAMA.

The protein belongs to the NhaA Na(+)/H(+) (TC 2.A.33) antiporter family.

It localises to the cell inner membrane. The enzyme catalyses Na(+)(in) + 2 H(+)(out) = Na(+)(out) + 2 H(+)(in). Its function is as follows. Na(+)/H(+) antiporter that extrudes sodium in exchange for external protons. The sequence is that of Na(+)/H(+) antiporter NhaA 1 from Pseudomonas putida (strain ATCC 47054 / DSM 6125 / CFBP 8728 / NCIMB 11950 / KT2440).